The sequence spans 340 residues: Quinic acid degradation cluster protein x (340 aa).

Positions 90, 115, 117, 118, and 262 each coordinate Mg(2+). A substrate-binding site is contributed by glutamate 90. Residues 117–120 (LDGT) and aspartate 262 contribute to the substrate site.

It belongs to the inositol monophosphatase superfamily.

Functionally, part of the qa gene cluster that mediates the catabolism of quinic acid (QA) and as such, allows the use of QA as a sole carbon source. Its function within the pathway has not been determined yet but it probably plays a regulatory role. The qa cluster encodes 3 inducible enymes (qa-2, qa-3 and qa-4) catalyzing the first three reactions in the catabolism of quinic acid to protocatechuic acid (also known as 3,4-Dihydroxybenzoic acid). In Neurospora crassa (strain ATCC 24698 / 74-OR23-1A / CBS 708.71 / DSM 1257 / FGSC 987), this protein is Quinic acid degradation cluster protein x.